A 117-amino-acid polypeptide reads, in one-letter code: Large ribosomal subunit protein eL8 (117 aa).

The protein belongs to the eukaryotic ribosomal protein eL8 family. Part of the 50S ribosomal subunit. Probably part of the RNase P complex.

The protein localises to the cytoplasm. In terms of biological role, multifunctional RNA-binding protein that recognizes the K-turn motif in ribosomal RNA, the RNA component of RNase P, box H/ACA, box C/D and box C'/D' sRNAs. This Methanococcus aeolicus (strain ATCC BAA-1280 / DSM 17508 / OCM 812 / Nankai-3) protein is Large ribosomal subunit protein eL8.